A 186-amino-acid chain; its full sequence is Ribosome-recycling factor (186 aa).

Belongs to the RRF family.

The protein resides in the cytoplasm. Its function is as follows. Responsible for the release of ribosomes from messenger RNA at the termination of protein biosynthesis. May increase the efficiency of translation by recycling ribosomes from one round of translation to another. This is Ribosome-recycling factor from Burkholderia lata (strain ATCC 17760 / DSM 23089 / LMG 22485 / NCIMB 9086 / R18194 / 383).